The sequence spans 75 residues: MNLRLSCLLFILVTSLPAGRCSIGNKGISFETCTAIEGLCFFGCKLGWVWIAYCNNIMSCCRKDTDFVLPQTKGI.

The signal sequence occupies residues 1–21; it reads MNLRLSCLLFILVTSLPAGRC. Disulfide bonds link Cys33–Cys60, Cys40–Cys54, and Cys44–Cys61.

Belongs to the beta-defensin family. In terms of tissue distribution, epididymis-specific, with highest levels in the initial segment and distal caput.

Its subcellular location is the secreted. Functionally, has bactericidal activity. May play a role in the antimicrobial protection of sperm and urogenital tract epithelia. The sequence is that of Beta-defensin 42 from Mus musculus (Mouse).